Here is a 425-residue protein sequence, read N- to C-terminus: Elongation factor 1-alpha (425 aa).

The 217-residue stretch at 5 to 221 (KPHMNLAVIG…DLFKMPDMPT (217 aa)) folds into the tr-type G domain. Residues 14–21 (GHIDHGKS) form a G1 region. 14-21 (GHIDHGKS) serves as a coordination point for GTP. S21 provides a ligand contact to Mg(2+). The tract at residues 70–74 (GITID) is G2. The G3 stretch occupies residues 91 to 94 (DCPG). GTP-binding positions include 91–95 (DCPGH) and 146–149 (NKMD). Residues 146–149 (NKMD) are G4. Residues 185–187 (SAF) form a G5 region.

This sequence belongs to the TRAFAC class translation factor GTPase superfamily. Classic translation factor GTPase family. EF-Tu/EF-1A subfamily.

The protein resides in the cytoplasm. The catalysed reaction is GTP + H2O = GDP + phosphate + H(+). Functionally, GTP hydrolase that promotes the GTP-dependent binding of aminoacyl-tRNA to the A-site of ribosomes during protein biosynthesis. This chain is Elongation factor 1-alpha, found in Methanocorpusculum labreanum (strain ATCC 43576 / DSM 4855 / Z).